A 381-amino-acid polypeptide reads, in one-letter code: CCN family member 1 (381 aa).

The first 24 residues, 1-24 (MSSRIARALALVVTLLHLTRLALS), serve as a signal peptide directing secretion. The IGFBP N-terminal domain occupies 25-94 (TCPAACHCPL…TALKGICRAQ (70 aa)). 6 disulfide bridges follow: Cys-26-Cys-50, Cys-30-Cys-52, Cys-32-Cys-53, Cys-39-Cys-56, Cys-64-Cys-78, and Cys-70-Cys-91. Residues 98–164 (RPCEYNSRIY…GQCCEEWVCD (67 aa)) form the VWFC domain. Ser-188 carries the phosphoserine modification. The TSP type-1 domain occupies 228 to 273 (KCIVQTTSWSQCSKTCGTGISTRVTNDNPECRLVKETRICEVRPCG). Positions 279–315 (SLKKGKKCSKTKKSPEPVRFTYAGCLSVKKYRPKYCG) are heparin-binding. 5 disulfide bridges follow: Cys-286/Cys-323, Cys-303/Cys-337, Cys-314/Cys-353, Cys-317/Cys-355, and Cys-322/Cys-359. In terms of domain architecture, CTCK spans 286-360 (CSKTKKSPEP…QSCKCNYNCP (75 aa)).

It belongs to the CCN family. Interaction with integrins is heparin- and cell-type-dependent and promotes cell adhesion.

It is found in the secreted. Its function is as follows. Promotes cell proliferation, chemotaxis, angiogenesis and cell adhesion. Appears to play a role in wound healing by up-regulating, in skin fibroblasts, the expression of a number of genes involved in angiogenesis, inflammation and matrix remodeling including VEGA-A, VEGA-C, MMP1, MMP3, TIMP1, uPA, PAI-1 and integrins alpha-3 and alpha-5. CCN1-mediated gene regulation is dependent on heparin-binding. Down-regulates the expression of alpha-1 and alpha-2 subunits of collagen type-1. Promotes cell adhesion and adhesive signaling through integrin alpha-6/beta-1, cell migration through integrin alpha-1/beta-5 and cell proliferation through integrin alpha-v/beta-3. The sequence is that of CCN family member 1 (CCN1) from Pan troglodytes (Chimpanzee).